Reading from the N-terminus, the 57-residue chain is uncharacterized protein (57 aa).

The interval 1 to 57 (MITPIGKNSNSNSNSNSNSNSNSNSNSNSNSNSNSNSNSNSNSNSNSNSNSNSNSNN) is disordered. The span at 8 to 57 (NSNSNSNSNSNSNSNSNSNSNSNSNSNSNSNSNSNSNSNSNSNSNSNSNN) shows a compositional bias: low complexity.

This is an uncharacterized protein from Dictyostelium discoideum (Social amoeba).